Reading from the N-terminus, the 553-residue chain is 2-succinyl-5-enolpyruvyl-6-hydroxy-3-cyclohexene-1-carboxylate synthase (553 aa).

It belongs to the TPP enzyme family. MenD subfamily. Homodimer. Mg(2+) is required as a cofactor. It depends on Mn(2+) as a cofactor. The cofactor is thiamine diphosphate.

The enzyme catalyses isochorismate + 2-oxoglutarate + H(+) = 5-enolpyruvoyl-6-hydroxy-2-succinyl-cyclohex-3-ene-1-carboxylate + CO2. It functions in the pathway quinol/quinone metabolism; 1,4-dihydroxy-2-naphthoate biosynthesis; 1,4-dihydroxy-2-naphthoate from chorismate: step 2/7. Its pathway is quinol/quinone metabolism; menaquinone biosynthesis. In terms of biological role, catalyzes the thiamine diphosphate-dependent decarboxylation of 2-oxoglutarate and the subsequent addition of the resulting succinic semialdehyde-thiamine pyrophosphate anion to isochorismate to yield 2-succinyl-5-enolpyruvyl-6-hydroxy-3-cyclohexene-1-carboxylate (SEPHCHC). This Thermobifida fusca (strain YX) protein is 2-succinyl-5-enolpyruvyl-6-hydroxy-3-cyclohexene-1-carboxylate synthase.